Reading from the N-terminus, the 78-residue chain is Small ribosomal subunit protein bS18 (78 aa).

This sequence belongs to the bacterial ribosomal protein bS18 family. As to quaternary structure, part of the 30S ribosomal subunit. Forms a tight heterodimer with protein bS6.

Binds as a heterodimer with protein bS6 to the central domain of the 16S rRNA, where it helps stabilize the platform of the 30S subunit. This Lactobacillus johnsonii (strain CNCM I-12250 / La1 / NCC 533) protein is Small ribosomal subunit protein bS18.